Reading from the N-terminus, the 263-residue chain is UPF0246 protein Strop_2927 (263 aa).

It belongs to the UPF0246 family.

The polypeptide is UPF0246 protein Strop_2927 (Salinispora tropica (strain ATCC BAA-916 / DSM 44818 / JCM 13857 / NBRC 105044 / CNB-440)).